The primary structure comprises 930 residues: Isoleucine--tRNA ligase (930 aa).

The disordered stretch occupies residues 1 to 21; the sequence is MRVKDTLNLGKTKFPMRGRLP. Residues 57–67 carry the 'HIGH' region motif; that stretch reads PYANGPIHIGH. E555 contacts L-isoleucyl-5'-AMP. A 'KMSKS' region motif is present at residues 596-600; it reads KMSKS. Position 599 (K599) interacts with ATP. 4 residues coordinate Zn(2+): C889, C892, C909, and C912.

The protein belongs to the class-I aminoacyl-tRNA synthetase family. IleS type 1 subfamily. In terms of assembly, monomer. It depends on Zn(2+) as a cofactor.

It localises to the cytoplasm. The enzyme catalyses tRNA(Ile) + L-isoleucine + ATP = L-isoleucyl-tRNA(Ile) + AMP + diphosphate. In terms of biological role, catalyzes the attachment of isoleucine to tRNA(Ile). As IleRS can inadvertently accommodate and process structurally similar amino acids such as valine, to avoid such errors it has two additional distinct tRNA(Ile)-dependent editing activities. One activity is designated as 'pretransfer' editing and involves the hydrolysis of activated Val-AMP. The other activity is designated 'posttransfer' editing and involves deacylation of mischarged Val-tRNA(Ile). This Limosilactobacillus fermentum (strain NBRC 3956 / LMG 18251) (Lactobacillus fermentum) protein is Isoleucine--tRNA ligase.